An 82-amino-acid chain; its full sequence is U17-hexatoxin-Hi1a (82 aa).

An N-terminal signal peptide occupies residues 1–21 (MKTIFAVTLLLFAIYVPECMP). 5 disulfide bridges follow: C22–C33, C27–C48, C32–C61, C58–C69, and C63–C75.

In terms of tissue distribution, expressed by the venom gland.

The protein localises to the secreted. Functionally, probable ion channel inhibitor. The protein is U17-hexatoxin-Hi1a of Hadronyche infensa (Fraser island funnel-web spider).